The sequence spans 283 residues: SNAP25 homologous protein SNAP32 (283 aa).

Disordered stretches follow at residues 1 to 64 (MSGR…AAAR) and 192 to 212 (LGLSDHPPQSNARQFHSEPTS). A compositionally biased stretch (polar residues) spans 198-212 (PPQSNARQFHSEPTS). In terms of domain architecture, t-SNARE coiled-coil homology spans 218 to 280 (EMEKAKQDDG…KGANTRARRL (63 aa)).

Belongs to the SNAP-25 family. As to quaternary structure, interacts with SYP121. Expressed in roots, culms and leaves.

The protein localises to the membrane. Functionally, t-SNARE involved in diverse vesicle trafficking and membrane fusion processes. May be involved in resistance to the rice blast fungus Magnaporthe oryzae. May contribute to host resistance to rice blast through interaction with SYP121. The protein is SNAP25 homologous protein SNAP32 of Oryza sativa subsp. japonica (Rice).